A 310-amino-acid chain; its full sequence is tRNA methyltransferase 10 homolog B (310 aa).

Residues 55-94 (RKQRNWERRLEVKKSKRKEEKLRKKLNRQDKDVSDAQLSK) adopt a coiled-coil conformation. Positions 101 to 298 (TKERLEGARA…AGIPPGKGFV (198 aa)) constitute an SAM-dependent MTase TRM10-type domain.

It belongs to the class IV-like SAM-binding methyltransferase superfamily. TRM10 family.

It carries out the reaction guanosine(9) in tRNA + S-adenosyl-L-methionine = N(1)-methylguanosine(9) in tRNA + S-adenosyl-L-homocysteine + H(+). Functionally, S-adenosyl-L-methionine-dependent guanine N(1)-methyltransferase that catalyzes the formation of N(1)-methylguanine at position 9 (m1G9) in tRNAs. Probably not able to catalyze formation of N(1)-methyladenine at position 9 (m1A9) in tRNAs. This Danio rerio (Zebrafish) protein is tRNA methyltransferase 10 homolog B (trmt10b).